A 256-amino-acid polypeptide reads, in one-letter code: Ribosomal RNA small subunit methyltransferase J (256 aa).

S-adenosyl-L-methionine is bound by residues 104-105 (RD), 120-121 (ER), 156-157 (SS), and D174.

This sequence belongs to the methyltransferase superfamily. RsmJ family.

The protein localises to the cytoplasm. The enzyme catalyses guanosine(1516) in 16S rRNA + S-adenosyl-L-methionine = N(2)-methylguanosine(1516) in 16S rRNA + S-adenosyl-L-homocysteine + H(+). Functionally, specifically methylates the guanosine in position 1516 of 16S rRNA. This chain is Ribosomal RNA small subunit methyltransferase J, found in Yersinia pseudotuberculosis serotype O:1b (strain IP 31758).